A 261-amino-acid chain; its full sequence is Cytochrome c oxidase subunit 3 (261 aa).

Over Met1–Pro15 the chain is Mitochondrial matrix. The chain crosses the membrane as a helical span at residues Trp16–Trp34. The Mitochondrial intermembrane portion of the chain corresponds to Phe35–Leu40. The chain crosses the membrane as a helical span at residues Thr41–Thr66. Residues Phe67–Thr72 are Mitochondrial matrix-facing. A helical membrane pass occupies residues Pro73 to Ser105. At Leu106 to Glu128 the chain is on the mitochondrial intermembrane side. A helical transmembrane segment spans residues Val129–Met152. Residues Glu153–Glu155 are Mitochondrial matrix-facing. The helical transmembrane segment at Arg156 to Glu183 threads the bilayer. Topologically, residues Ala184–Asp190 are mitochondrial intermembrane. The chain crosses the membrane as a helical span at residues Gly191–Val223. Topologically, residues Gln224–His232 are mitochondrial matrix. A helical membrane pass occupies residues Phe233–Ile256. The Mitochondrial intermembrane portion of the chain corresponds to Tyr257–Ser261.

It belongs to the cytochrome c oxidase subunit 3 family. As to quaternary structure, component of the cytochrome c oxidase (complex IV, CIV), a multisubunit enzyme composed of 14 subunits. The complex is composed of a catalytic core of 3 subunits MT-CO1, MT-CO2 and MT-CO3, encoded in the mitochondrial DNA, and 11 supernumerary subunits COX4I, COX5A, COX5B, COX6A, COX6B, COX6C, COX7A, COX7B, COX7C, COX8 and NDUFA4, which are encoded in the nuclear genome. The complex exists as a monomer or a dimer and forms supercomplexes (SCs) in the inner mitochondrial membrane with NADH-ubiquinone oxidoreductase (complex I, CI) and ubiquinol-cytochrome c oxidoreductase (cytochrome b-c1 complex, complex III, CIII), resulting in different assemblies (supercomplex SCI(1)III(2)IV(1) and megacomplex MCI(2)III(2)IV(2)).

Its subcellular location is the mitochondrion inner membrane. It catalyses the reaction 4 Fe(II)-[cytochrome c] + O2 + 8 H(+)(in) = 4 Fe(III)-[cytochrome c] + 2 H2O + 4 H(+)(out). Component of the cytochrome c oxidase, the last enzyme in the mitochondrial electron transport chain which drives oxidative phosphorylation. The respiratory chain contains 3 multisubunit complexes succinate dehydrogenase (complex II, CII), ubiquinol-cytochrome c oxidoreductase (cytochrome b-c1 complex, complex III, CIII) and cytochrome c oxidase (complex IV, CIV), that cooperate to transfer electrons derived from NADH and succinate to molecular oxygen, creating an electrochemical gradient over the inner membrane that drives transmembrane transport and the ATP synthase. Cytochrome c oxidase is the component of the respiratory chain that catalyzes the reduction of oxygen to water. Electrons originating from reduced cytochrome c in the intermembrane space (IMS) are transferred via the dinuclear copper A center (CU(A)) of subunit 2 and heme A of subunit 1 to the active site in subunit 1, a binuclear center (BNC) formed by heme A3 and copper B (CU(B)). The BNC reduces molecular oxygen to 2 water molecules using 4 electrons from cytochrome c in the IMS and 4 protons from the mitochondrial matrix. The chain is Cytochrome c oxidase subunit 3 (mt-co3) from Oncorhynchus masou (Cherry salmon).